Consider the following 28-residue polypeptide: Toxin a (28 aa).

In terms of domain architecture, LCN-type CS-alpha/beta spans 3 to 28 (VPGNYPLDSYGNCYPCTILGDNQYCI).

This sequence belongs to the long (3 C-C) scorpion toxin superfamily. Expressed by the venom gland.

The protein localises to the secreted. In terms of biological role, binds to sodium channels (Nav) and affects the channel activation process. This chain is Toxin a, found in Androctonus crassicauda (Arabian fat-tailed scorpion).